We begin with the raw amino-acid sequence, 367 residues long: Apolipoprotein A-V (367 aa).

Residues 1-20 (MVAVLTWALALLSAFATVQT) form the signal peptide. Ser56 bears the Phosphoserine mark. The segment at 71–90 (LGPLSGQGREPPGLPHDPEG) is disordered.

It belongs to the apolipoprotein A1/A4/E family. Interacts with GPIHBP1. Interacts with SORL1; this interaction leads to APOA5 internalization and sorting either to lysosomes and degradation, or to the trans-Golgi network. In terms of processing, phosphorylated by FAM20C in the extracellular medium.

The protein localises to the secreted. The protein resides in the early endosome. It localises to the late endosome. Its subcellular location is the golgi apparatus. It is found in the trans-Golgi network. Minor apolipoprotein mainly associated with HDL and to a lesser extent with VLDL. May also be associated with chylomicrons. Important determinant of plasma triglyceride (TG) levels by both being a potent stimulator of apo-CII lipoprotein lipase (LPL) TG hydrolysis and an inhibitor of the hepatic VLDL-TG production rate (without affecting the VLDL-apoB production rate). Activates poorly lecithin:cholesterol acyltransferase (LCAT) and does not enhance efflux of cholesterol from macrophages. Binds heparin. The sequence is that of Apolipoprotein A-V (APOA5) from Neomonachus schauinslandi (Hawaiian monk seal).